Consider the following 589-residue polypeptide: Type I restriction enzyme EcoAI specificity subunit (589 aa).

The protein belongs to the type-I restriction system S methylase family. As to quaternary structure, the type I restriction/modification system is composed of three polypeptides R, M and S. The restriction enzyme has stoichiometry R(2)M(2)S(1) while the methyltransferase is M(2)S(1).

In terms of biological role, the specificity (S) subunit of a type I restriction enzyme; this subunit dictates DNA sequence specificity. The M and S subunits together form a methyltransferase (MTase) that methylates A-2 on the top strand and A-3 on the bottom strand of the sequence 5'-GAGN(7)GTCA-3'. In the presence of the R subunit the complex can also act as an endonuclease, binding to the same target sequence but cutting the DNA some distance from this site. Whether the DNA is cut or modified depends on the methylation state of the target sequence. When the target site is unmodified, the DNA is cut. When the target site is hemimethylated, the complex acts as a maintenance MTase modifying the DNA so that both strands become methylated. After locating a non-methylated recognition site, the enzyme complex serves as a molecular motor that translocates DNA in an ATP-dependent manner until a collision occurs that triggers cleavage. In Escherichia coli, this protein is Type I restriction enzyme EcoAI specificity subunit.